The chain runs to 403 residues: Ribosomal RNA large subunit methyltransferase I (403 aa).

The 80-residue stretch at 9 to 88 folds into the PUA domain; that stretch reads YPRLVLSKGR…ESIDIAFFTR (80 aa).

The protein belongs to the methyltransferase superfamily. RlmI family.

The protein resides in the cytoplasm. The catalysed reaction is cytidine(1962) in 23S rRNA + S-adenosyl-L-methionine = 5-methylcytidine(1962) in 23S rRNA + S-adenosyl-L-homocysteine + H(+). Functionally, specifically methylates the cytosine at position 1962 (m5C1962) of 23S rRNA. The sequence is that of Ribosomal RNA large subunit methyltransferase I from Salmonella typhi.